A 513-amino-acid polypeptide reads, in one-letter code: Putative fucosyltransferase-like protein (513 aa).

The tract at residues 1 to 34 (MGVFSNLRGPRAGATHDEFPATNGSPSSSSSPSS) is disordered. The Cytoplasmic portion of the chain corresponds to 1-39 (MGVFSNLRGPRAGATHDEFPATNGSPSSSSSPSSSIKRK). A compositionally biased stretch (low complexity) spans 25 to 34 (SPSSSSSPSS). Residues 40-60 (LSNLLPLCVALVVIAEIGFLG) traverse the membrane as a helical; Signal-anchor for type II membrane protein segment. Topologically, residues 61 to 513 (RLDKVALVDT…PCAKFEVVFV (453 aa)) are lumenal. 2 N-linked (GlcNAc...) asparagine glycosylation sites follow: Asn-348 and Asn-493.

This sequence belongs to the glycosyltransferase 10 family.

It localises to the golgi apparatus. It is found in the golgi stack membrane. The protein operates within protein modification; protein glycosylation. Functionally, may be involved in cell wall biosynthesis. May act as a fucosyltransferase. The chain is Putative fucosyltransferase-like protein (FUT12) from Arabidopsis thaliana (Mouse-ear cress).